A 185-amino-acid chain; its full sequence is Large ribosomal subunit protein uL5 (185 aa).

The protein belongs to the universal ribosomal protein uL5 family. In terms of assembly, part of the 50S ribosomal subunit; part of the 5S rRNA/L5/L18/L25 subcomplex. Contacts the 5S rRNA and the P site tRNA. Forms a bridge to the 30S subunit in the 70S ribosome.

Functionally, this is one of the proteins that bind and probably mediate the attachment of the 5S RNA into the large ribosomal subunit, where it forms part of the central protuberance. In the 70S ribosome it contacts protein S13 of the 30S subunit (bridge B1b), connecting the 2 subunits; this bridge is implicated in subunit movement. Contacts the P site tRNA; the 5S rRNA and some of its associated proteins might help stabilize positioning of ribosome-bound tRNAs. This Streptomyces coelicolor (strain ATCC BAA-471 / A3(2) / M145) protein is Large ribosomal subunit protein uL5.